The primary structure comprises 94 residues: Co-chaperonin GroES (94 aa).

It belongs to the GroES chaperonin family. In terms of assembly, heptamer of 7 subunits arranged in a ring. Interacts with the chaperonin GroEL.

Its subcellular location is the cytoplasm. Functionally, together with the chaperonin GroEL, plays an essential role in assisting protein folding. The GroEL-GroES system forms a nano-cage that allows encapsulation of the non-native substrate proteins and provides a physical environment optimized to promote and accelerate protein folding. GroES binds to the apical surface of the GroEL ring, thereby capping the opening of the GroEL channel. This is Co-chaperonin GroES from Acetivibrio thermocellus (strain ATCC 27405 / DSM 1237 / JCM 9322 / NBRC 103400 / NCIMB 10682 / NRRL B-4536 / VPI 7372) (Clostridium thermocellum).